We begin with the raw amino-acid sequence, 126 residues long: Small ribosomal subunit protein uS13 (126 aa).

The disordered stretch occupies residues 94-126 (RGLPVHGQRTSTNARTRKGPRRAIAGKKKPGKK). The segment covering 108-126 (RTRKGPRRAIAGKKKPGKK) has biased composition (basic residues).

Belongs to the universal ribosomal protein uS13 family. In terms of assembly, part of the 30S ribosomal subunit. Forms a loose heterodimer with protein S19. Forms two bridges to the 50S subunit in the 70S ribosome.

Located at the top of the head of the 30S subunit, it contacts several helices of the 16S rRNA. In the 70S ribosome it contacts the 23S rRNA (bridge B1a) and protein L5 of the 50S subunit (bridge B1b), connecting the 2 subunits; these bridges are implicated in subunit movement. Contacts the tRNAs in the A and P-sites. The chain is Small ribosomal subunit protein uS13 from Streptomyces griseus subsp. griseus (strain JCM 4626 / CBS 651.72 / NBRC 13350 / KCC S-0626 / ISP 5235).